The primary structure comprises 228 residues: CD9 antigen (228 aa).

Residues 2–12 (PVKGGTKCIKY) are Cytoplasmic-facing. C9 carries the S-palmitoyl cysteine lipid modification. A helical membrane pass occupies residues 13 to 33 (LLFGFNFIFWLAGIAVLAIGL). The Extracellular portion of the chain corresponds to 34-55 (WLRFDSQTKSIFEQETNNNNSS). 2 N-linked (GlcNAc...) asparagine glycosylation sites follow: N52 and N53. Residues 56–76 (FYTGVYILIGAGALMMLVGFL) form a helical membrane-spanning segment. The Cytoplasmic portion of the chain corresponds to 77–87 (GCCGAVQESQC). 3 S-palmitoyl cysteine lipidation sites follow: C78, C79, and C87. The helical transmembrane segment at 88 to 111 (MLGLFFGFLLVIFAIEIAAAIWGY) threads the bilayer. Topologically, residues 112–195 (SHKDEVIKEV…KEVFDNKFHI (84 aa)) are extracellular. Cystine bridges form between C152–C181 and C153–C167. Residues 196 to 221 (IGAVGIGIAVVMIFGMIFSMILCCAI) traverse the membrane as a helical segment. S-palmitoyl cysteine attachment occurs at residues C218 and C219. At 222–228 (RRNREMV) the chain is on the cytoplasmic side.

The protein belongs to the tetraspanin (TM4SF) family. Forms both disulfide-linked homodimers and higher homooligomers as well as heterooligomers with other members of the tetraspanin family. Interacts (via the second extracellular domain) with integrin ITGAV:ITGB3. Interacts with integrin ITGA6:ITGB1; interaction takes place in oocytes and is involved in sperm-egg fusion. Part of integrin-tetraspanin complexes composed of CD81, beta-1 and beta-2 integrins in the membrane of monocyte/macrophages. Interacts with CD63; identified in a complex with CD63 and ITGB3. Associates with CR2/CD21 and with PTGFRN/CD9P1. Part of a complex composed of CD9, CD81, PTGFRN and IGSF8. Interacts directly with IGSF8. Interacts with PDPN; this interaction is homophilic and attenuates platelet aggregation and pulmonary metastasis induced by PDPN. Interacts (on T cell side) with CD81 at immunological synapses between antigen-presenting cells and T cells. Post-translationally, palmitoylated at a low, basal level in unstimulated platelets. The level of palmitoylation increases when platelets are activated by thrombin (in vitro). The protein exists in three forms with molecular masses between 22 and 27 kDa, and is known to carry covalently linked fatty acids. Palmitoylation by ZDHHC2 regulates CD9 expression, association with other tetraspanin family proteins and function in cell adhesion. As to expression, detected in platelets (at protein level). Expressed by a variety of hematopoietic and epithelial cells.

Its subcellular location is the cell membrane. The protein resides in the membrane. It is found in the secreted. The protein localises to the extracellular exosome. In terms of biological role, integral membrane protein associated with integrins, which regulates different processes, such as sperm-egg fusion, platelet activation and aggregation, and cell adhesion. Present at the cell surface of oocytes and plays a key role in sperm-egg fusion, possibly by organizing multiprotein complexes and the morphology of the membrane required for the fusion. In myoblasts, associates with CD81 and PTGFRN and inhibits myotube fusion during muscle regeneration. In macrophages, associates with CD81 and beta-1 and beta-2 integrins, and prevents macrophage fusion into multinucleated giant cells specialized in ingesting complement-opsonized large particles. Also prevents the fusion between mononuclear cell progenitors into osteoclasts in charge of bone resorption. Acts as a receptor for PSG17. Involved in platelet activation and aggregation. Regulates paranodal junction formation. Involved in cell adhesion, cell motility and tumor metastasis. In Homo sapiens (Human), this protein is CD9 antigen.